Reading from the N-terminus, the 328-residue chain is Zinc transporter ZIP13 (328 aa).

Over 1–7 (MPGCPCP) the chain is Lumenal. A helical transmembrane segment spans residues 8–28 (GCGMAGPRLLFLTALALELLG). At 29-68 (RAGGSQPALRSRGTATACRLDNKESESWGALLSGERLDTW) the chain is on the cytoplasmic side. Residues 69-89 (ICSLLGSLMVGLSGVFPLLVI) traverse the membrane as a helical segment. The Lumenal portion of the chain corresponds to 90 to 108 (PLEMGTMLRSEAGAWHLKQ). A helical membrane pass occupies residues 109 to 129 (LLSFALGGLLGNVFLHLLPEA). Over 130 to 149 (WAYTCSASPGGEGQSLQQQQ) the chain is Cytoplasmic. Residues 150–170 (QLGLWVIAGILTFLALEKMFL) form a helical membrane-spanning segment. The Lumenal segment spans residues 171-199 (DSKEEGTSQVSGYLNLLANTIDNFTHGLA). Residues 200–220 (VAASFLVSKKIGLLTTMAILL) form a helical membrane-spanning segment. The XEXPHE-motif motif lies at 221 to 226 (HEIPHE). At 221–242 (HEIPHEVGDFAILLRAGFDRWS) the chain is on the cytoplasmic side. Residues 243–263 (AAKLQLSTALGGLLGAGFAIC) form a helical membrane-spanning segment. Topologically, residues 264–273 (TQSPKGVEET) are lumenal. A helical membrane pass occupies residues 274–294 (AAWVLPFTSGGFLYIALVNVL). The Cytoplasmic portion of the chain corresponds to 295-306 (PDLLEEEDPWRS). A helical membrane pass occupies residues 307–327 (LQQLLLLCAGIVVMVLFSLFV). A topological domain (lumenal) is located at residue Asp328.

This sequence belongs to the ZIP transporter (TC 2.A.5) family. As to quaternary structure, homodimer.

The protein localises to the golgi apparatus membrane. It localises to the cytoplasmic vesicle membrane. The protein resides in the endoplasmic reticulum membrane. The catalysed reaction is Zn(2+)(in) = Zn(2+)(out). In terms of biological role, functions as a zinc transporter transporting Zn(2+) from the Golgi apparatus to the cytosol and thus influences the zinc level at least in areas of the cytosol. May regulate beige adipocyte differentiation. This chain is Zinc transporter ZIP13, found in Pongo abelii (Sumatran orangutan).